The sequence spans 170 residues: Transcriptional repressor NrdR (170 aa).

Residues 3 to 34 fold into a zinc finger; sequence CPFCRHPDSRVVDSRTTDDGTSIRRRRQCPDC. Residues 46–136 form the ATP-cone domain; sequence LMVVKRSGVT…VYRAFDSLED (91 aa). Positions 148–170 are disordered; sequence RPSAEDRGSGETLEVPAPAIAAD.

The protein belongs to the NrdR family. Zn(2+) serves as cofactor.

In terms of biological role, negatively regulates transcription of bacterial ribonucleotide reductase nrd genes and operons by binding to NrdR-boxes. The protein is Transcriptional repressor NrdR of Streptomyces griseus subsp. griseus (strain JCM 4626 / CBS 651.72 / NBRC 13350 / KCC S-0626 / ISP 5235).